An 875-amino-acid polypeptide reads, in one-letter code: cGMP-specific 3',5'-cyclic phosphodiesterase (875 aa).

Disordered regions lie at residues 1-29 and 78-102; these read MERA…DQDS and SCSC…RKIS. The span at 10–22 shows a compositional bias: low complexity; sequence QQRQQQQPQQQKQ. The span at 78-101 shows a compositional bias: polar residues; that stretch reads SCSCPLQQSPRADNSAPGTPTRKI. The residue at position 102 (S102) is a Phosphoserine. 2 GAF domains span residues 164–314 and 346–503; these read DVTA…GIVL and SLEV…GLGI. The PDEase domain occupies 536–860; the sequence is ETRELQSLAA…QKWQALAEQQ (325 aa). H613 (proton donor) is an active-site residue. Zn(2+) contacts are provided by H617, H653, D654, and D764. D654 contributes to the Mg(2+) binding site. Q817 is a 3',5'-cyclic GMP binding site.

It belongs to the cyclic nucleotide phosphodiesterase family. It depends on Zn(2+) as a cofactor. Mg(2+) is required as a cofactor. Phosphorylation is regulated by binding of cGMP to the two allosteric sites. Phosphorylation by PRKG1 leads to its activation. In terms of tissue distribution, expressed in aortic smooth muscle cells, heart, placenta, skeletal muscle and pancreas and, to a much lesser extent, in brain, liver and lung.

The catalysed reaction is 3',5'-cyclic GMP + H2O = GMP + H(+). It functions in the pathway purine metabolism; 3',5'-cyclic GMP degradation; GMP from 3',5'-cyclic GMP: step 1/1. Its activity is regulated as follows. Sildenafil (Viagra) is a highly selective and potent inhibitor of PDE5A and is effective in the treatment of penile erectile dysfunction. Also inhibited by zaprinast. Functionally, plays a role in signal transduction by regulating the intracellular concentration of cyclic nucleotides. This phosphodiesterase catalyzes the specific hydrolysis of cGMP to 5'-GMP. Specifically regulates nitric-oxide-generated cGMP. This Homo sapiens (Human) protein is cGMP-specific 3',5'-cyclic phosphodiesterase.